A 518-amino-acid chain; its full sequence is MDKNFRVNTNDERNIWLSTAVNENLTMASSSSQPQPISSPFHQPENQVNRVNPGSHYYDLETLESSFGGLSFNDSSVGQNGDSIHLPRRTNQVFTGSSSGGAGDDNGYLLPPMGSHHHRELEELQRHNYLNQLRMSYQNDYAHQSYWYNTDGDGNGMLNNGFLNDVPSSSRDRVSDYYTNRFGYEGYNYWRGNEGFDYNQCQASFSAFAKDKEMSERLGMSIFQGTKETVDAIYNGLIGDICELMVDPYGSDVVQLLMRRCSSEQIVQLVDIVTQQMFQFVNICIDSLGTNAIQVLLTCINERAKDQIPRIVDVVRTVALQLSKSNHAIFVILACFRLFPLHCRLLLELIVQNCHQIAIDQHGCCLLQLCFNKDRVPNLEIRQRLIMEAIANALRLCLNCYGNYVVQYIVELNNRYLIDALVRQLIGNYAHLARNKYGSHAVQKLLKLRWIDSRVIVIDLLREIDTLLLDPFGNYVIQTAWFVSKDDVRRMLRYHIERNIPMMRCNKFGNKVLEKLNI.

Disordered regions lie at residues 26 to 46 (TMAS…QPEN) and 77 to 114 (VGQN…PPMG). Low complexity predominate over residues 29–44 (SSSSQPQPISSPFHQP). Residues 178-518 (YTNRFGYEGY…GNKVLEKLNI (341 aa)) enclose the PUM-HD domain. Residues 206–235 (SAFAKDKEMSERLGMSIFQGTKETVDAIYN) form a Pumilio 1; degenerate repeat. 7 Pumilio repeats span residues 236–271 (GLIG…QLVD), 275–313 (QQMF…RIVD), 314–348 (VVRT…LLLE), 349–387 (LIVQ…RLIM), 388–423 (EAIA…ALVR), 424–459 (QLIG…IVID), and 460–494 (LLRE…MLRY).

Its subcellular location is the cytoplasm. The protein localises to the nucleus. Its function is as follows. Sequence-specific RNA-binding protein that regulates translation and mRNA stability by binding the 3'-UTR of target mRNAs. This chain is Pumilio homolog 14 (APUM14), found in Arabidopsis thaliana (Mouse-ear cress).